The chain runs to 250 residues: MTILFLTMVISYFGCMKAAPMKEANLRAQGSLAYPGVRTHGTLESMNGPKVGSRGLTSSSSLADTFEHVIEELLDEDQKVRPSEENNKDADMYTSRVMLSSQVPLEPPLLFLLEEYKNYLDAANMSMRVRRHSDPARRGELSVCDSISEWVTAADKKTAVDMSGGTVTVLEKVPVSKGQLKQYFYETKCNPMGYTKEGCRGIDKRHWNSQCRTTQSYVRALTMDSKKRIGWRFIRIDTSCVCTLTIKRGR.

Residues 1 to 18 (MTILFLTMVISYFGCMKA) form the signal peptide. Positions 19–131 (APMKEANLRA…AANMSMRVRR (113 aa)) are excised as a propeptide. Disulfide bonds link cysteine 144–cysteine 211, cysteine 189–cysteine 240, and cysteine 199–cysteine 242.

This sequence belongs to the NGF-beta family. Monomers and homodimers. Binds to NTRK2/TRKB. Can form heterodimers with other neurotrophin family members, such as NTF3 and NTF4 (in vitro), but the physiological relevance of this is not clear. BDNF precursor form: interacts with the heterodimer formed by NGFR and SORCS2. Mature BDNF has much lower affinity for the heterodimer formed by NGFR and SORCS2. In terms of processing, N-glycosylated and glycosulfated, contrary to mature BDNF. Mature BDNF is produced by proteolytic removal of the propeptide, catalyzed by a FURIN family member. In addition, the precursor form is proteolytically cleaved within the propeptide, but this is not an obligatory intermediate for the production of mature BDNF. Can be converted into mature BDNF by plasmin (PLG).

Its subcellular location is the secreted. In terms of biological role, important signaling molecule that activates signaling cascades downstream of NTRK2. During development, promotes the survival and differentiation of selected neuronal populations of the peripheral and central nervous systems. Participates in axonal growth, pathfinding and in the modulation of dendritic growth and morphology. Major regulator of synaptic transmission and plasticity at adult synapses in many regions of the CNS. The versatility of BDNF is emphasized by its contribution to a range of adaptive neuronal responses including long-term potentiation (LTP), long-term depression (LTD), certain forms of short-term synaptic plasticity, as well as homeostatic regulation of intrinsic neuronal excitability. Functionally, important signaling molecule that activates signaling cascades downstream of NTRK2. Activates signaling cascades via the heterodimeric receptor formed by NGFR and SORCS2. Signaling via NGFR and SORCS2 plays a role in synaptic plasticity and long-term depression (LTD). Binding to NGFR and SORCS2 promotes neuronal apoptosis. Promotes neuronal growth cone collapse. The protein is Neurotrophic factor BDNF precursor form (BDNF) of Bos taurus (Bovine).